We begin with the raw amino-acid sequence, 336 residues long: Holliday junction branch migration complex subunit RuvB (336 aa).

Positions 4 to 184 are large ATPase domain (RuvB-L); it reads ADRLISAASN…FGIVQRLEFY (181 aa). ATP contacts are provided by residues Ile23, Arg24, Gly65, Lys68, Thr69, Thr70, 131–133, Arg174, Tyr184, and Arg221; that span reads EDY. Thr69 is a binding site for Mg(2+). A small ATPAse domain (RuvB-S) region spans residues 185–255; the sequence is QVPDLQYIVG…VAAQALDMLN (71 aa). Residues 258 to 336 form a head domain (RuvB-H) region; it reads AEGFDYMDRK…HFGITPPEMP (79 aa). Residues Arg294, Arg313, and Arg318 each contribute to the DNA site.

The protein belongs to the RuvB family. As to quaternary structure, homohexamer. Forms an RuvA(8)-RuvB(12)-Holliday junction (HJ) complex. HJ DNA is sandwiched between 2 RuvA tetramers; dsDNA enters through RuvA and exits via RuvB. An RuvB hexamer assembles on each DNA strand where it exits the tetramer. Each RuvB hexamer is contacted by two RuvA subunits (via domain III) on 2 adjacent RuvB subunits; this complex drives branch migration. In the full resolvosome a probable DNA-RuvA(4)-RuvB(12)-RuvC(2) complex forms which resolves the HJ.

It is found in the cytoplasm. It carries out the reaction ATP + H2O = ADP + phosphate + H(+). The RuvA-RuvB-RuvC complex processes Holliday junction (HJ) DNA during genetic recombination and DNA repair, while the RuvA-RuvB complex plays an important role in the rescue of blocked DNA replication forks via replication fork reversal (RFR). RuvA specifically binds to HJ cruciform DNA, conferring on it an open structure. The RuvB hexamer acts as an ATP-dependent pump, pulling dsDNA into and through the RuvAB complex. RuvB forms 2 homohexamers on either side of HJ DNA bound by 1 or 2 RuvA tetramers; 4 subunits per hexamer contact DNA at a time. Coordinated motions by a converter formed by DNA-disengaged RuvB subunits stimulates ATP hydrolysis and nucleotide exchange. Immobilization of the converter enables RuvB to convert the ATP-contained energy into a lever motion, pulling 2 nucleotides of DNA out of the RuvA tetramer per ATP hydrolyzed, thus driving DNA branch migration. The RuvB motors rotate together with the DNA substrate, which together with the progressing nucleotide cycle form the mechanistic basis for DNA recombination by continuous HJ branch migration. Branch migration allows RuvC to scan DNA until it finds its consensus sequence, where it cleaves and resolves cruciform DNA. The sequence is that of Holliday junction branch migration complex subunit RuvB from Enterobacter sp. (strain 638).